The primary structure comprises 244 residues: Proteasome subunit alpha 2 (244 aa).

The protein belongs to the peptidase T1A family. The 20S proteasome core is composed of 14 alpha and 14 beta subunits that assemble into four stacked heptameric rings, resulting in a barrel-shaped structure. The two inner rings, each composed of seven catalytic beta subunits, are sandwiched by two outer rings, each composed of seven alpha subunits. The catalytic chamber with the active sites is on the inside of the barrel. Has a gated structure, the ends of the cylinder being occluded by the N-termini of the alpha-subunits. Is capped at one or both ends by the proteasome regulatory ATPase, PAN.

Its subcellular location is the cytoplasm. With respect to regulation, the formation of the proteasomal ATPase PAN-20S proteasome complex, via the docking of the C-termini of PAN into the intersubunit pockets in the alpha-rings, triggers opening of the gate for substrate entry. Interconversion between the open-gate and close-gate conformations leads to a dynamic regulation of the 20S proteasome proteolysis activity. Functionally, component of the proteasome core, a large protease complex with broad specificity involved in protein degradation. The polypeptide is Proteasome subunit alpha 2 (Haloarcula marismortui (strain ATCC 43049 / DSM 3752 / JCM 8966 / VKM B-1809) (Halobacterium marismortui)).